We begin with the raw amino-acid sequence, 254 residues long: MKFEAIAVEKIPLIRKGDDLPYIICERIELQDRDIIVIASTIVAKAEGETFRLEDITPGEEALAIASRTGKDARFIQAVLSRSREVFVEAPFMLVTTLAGHTCVNAGVDESNIEHGFLLYPPKNPDSSASKLGERLESISGKKLSVIITDTNGRAFKIGQTGVAIGIYKIKPIKRWIGEKDLFDKVLEITEEAVADELAGAANLLMGEGAGGIPVAVIRGLDYYCEEEISMSENYRPEDMDVIKKGLRCLQKKN.

GTP contacts are provided by residues 11–14 (IPLI), 40–41 (ST), and K45. D109 provides a ligand contact to a divalent metal cation. N112 is a binding site for GTP. A divalent metal cation-binding residues include D150, T151, and E208. GTP is bound at residue 206–213 (MGEGAGGI).

It belongs to the CofE family. As to quaternary structure, homodimer. Requires Mg(2+) as cofactor. Mn(2+) serves as cofactor. K(+) is required as a cofactor.

It catalyses the reaction oxidized coenzyme F420-0 + GTP + L-glutamate = oxidized coenzyme F420-1 + GDP + phosphate + H(+). The enzyme catalyses oxidized coenzyme F420-1 + GTP + L-glutamate = oxidized coenzyme F420-2 + GDP + phosphate + H(+). The protein operates within cofactor biosynthesis; coenzyme F420 biosynthesis. Functionally, catalyzes the GTP-dependent successive addition of two or more gamma-linked L-glutamates to the L-lactyl phosphodiester of 7,8-didemethyl-8-hydroxy-5-deazariboflavin (F420-0) to form coenzyme F420-0-glutamyl-glutamate (F420-2) or polyglutamated F420 derivatives. The chain is Coenzyme F420:L-glutamate ligase from Methanosarcina acetivorans (strain ATCC 35395 / DSM 2834 / JCM 12185 / C2A).